Reading from the N-terminus, the 486-residue chain is UDP-N-acetylmuramate--L-alanine ligase (486 aa).

123–129 (GTHGKTT) contacts ATP.

This sequence belongs to the MurCDEF family.

The protein resides in the cytoplasm. It catalyses the reaction UDP-N-acetyl-alpha-D-muramate + L-alanine + ATP = UDP-N-acetyl-alpha-D-muramoyl-L-alanine + ADP + phosphate + H(+). It participates in cell wall biogenesis; peptidoglycan biosynthesis. Functionally, cell wall formation. The chain is UDP-N-acetylmuramate--L-alanine ligase from Pseudomonas syringae pv. syringae (strain B728a).